A 959-amino-acid polypeptide reads, in one-letter code: Translation initiation factor IF-2 (959 aa).

The segment covering 1–10 has biased composition (basic and acidic residues); it reads MSDKTNDDKT. The segment at 1–374 is disordered; sequence MSDKTNDDKT…SQMQETREKI (374 aa). Polar residues predominate over residues 27 to 37; that stretch reads EQSTVRQNFSH. Low complexity-rich tracts occupy residues 63-118 and 128-138; these read AAAA…VTKP and QRPGGQQAQRP. Composition is skewed to basic and acidic residues over residues 154 to 225 and 232 to 241; these read SEMD…EAAK and ARSERRDDAR. Over residues 246-284 the composition is skewed to low complexity; the sequence is GARPQQAGRPQGGRPQPAGRPQQGSPRPAPIIADAAPIA. Residues 318–333 are compositionally biased toward basic and acidic residues; sequence PEVRAPKVVKGEDDRR. Residues 457-626 form the tr-type G domain; the sequence is SRPPVVTIMG…LLQAEMLDLK (170 aa). The segment at 466-473 is G1; the sequence is GHVDHGKT. 466–473 lines the GTP pocket; the sequence is GHVDHGKT. The tract at residues 491–495 is G2; it reads GITQH. Positions 512–515 are G3; it reads DTPG. GTP contacts are provided by residues 512–516 and 566–569; these read DTPGH and NKID. The tract at residues 566-569 is G4; it reads NKID. Positions 602-604 are G5; sequence SAK.

This sequence belongs to the TRAFAC class translation factor GTPase superfamily. Classic translation factor GTPase family. IF-2 subfamily.

The protein localises to the cytoplasm. In terms of biological role, one of the essential components for the initiation of protein synthesis. Protects formylmethionyl-tRNA from spontaneous hydrolysis and promotes its binding to the 30S ribosomal subunits. Also involved in the hydrolysis of GTP during the formation of the 70S ribosomal complex. The sequence is that of Translation initiation factor IF-2 from Brucella abortus (strain 2308).